The following is a 596-amino-acid chain: Elongation factor 4 (596 aa).

One can recognise a tr-type G domain in the interval K2 to N183. Residues D14–T19 and N130–D133 each bind GTP.

This sequence belongs to the TRAFAC class translation factor GTPase superfamily. Classic translation factor GTPase family. LepA subfamily.

It is found in the cell inner membrane. The enzyme catalyses GTP + H2O = GDP + phosphate + H(+). Its function is as follows. Required for accurate and efficient protein synthesis under certain stress conditions. May act as a fidelity factor of the translation reaction, by catalyzing a one-codon backward translocation of tRNAs on improperly translocated ribosomes. Back-translocation proceeds from a post-translocation (POST) complex to a pre-translocation (PRE) complex, thus giving elongation factor G a second chance to translocate the tRNAs correctly. Binds to ribosomes in a GTP-dependent manner. This Campylobacter concisus (strain 13826) protein is Elongation factor 4.